The chain runs to 102 residues: NADH-quinone oxidoreductase subunit K (102 aa).

Helical transmembrane passes span isoleucine 5 to leucine 25, isoleucine 31 to phenylalanine 51, and phenylalanine 66 to phenylalanine 86.

The protein belongs to the complex I subunit 4L family. NDH-1 is composed of 14 different subunits. Subunits NuoA, H, J, K, L, M, N constitute the membrane sector of the complex.

The protein resides in the cell inner membrane. It carries out the reaction a quinone + NADH + 5 H(+)(in) = a quinol + NAD(+) + 4 H(+)(out). Its function is as follows. NDH-1 shuttles electrons from NADH, via FMN and iron-sulfur (Fe-S) centers, to quinones in the respiratory chain. The immediate electron acceptor for the enzyme in this species is believed to be ubiquinone. Couples the redox reaction to proton translocation (for every two electrons transferred, four hydrogen ions are translocated across the cytoplasmic membrane), and thus conserves the redox energy in a proton gradient. In Bartonella bacilliformis (strain ATCC 35685 / KC583 / Herrer 020/F12,63), this protein is NADH-quinone oxidoreductase subunit K.